The sequence spans 1400 residues: DNA-directed RNA polymerase subunit beta' (1400 aa).

Positions 71, 73, 86, and 89 each coordinate Zn(2+). Mg(2+) contacts are provided by D462, D464, and D466. Residues C820, C893, C900, and C903 each contribute to the Zn(2+) site.

Belongs to the RNA polymerase beta' chain family. The RNAP catalytic core consists of 2 alpha, 1 beta, 1 beta' and 1 omega subunit. When a sigma factor is associated with the core the holoenzyme is formed, which can initiate transcription. Mg(2+) serves as cofactor. Zn(2+) is required as a cofactor.

It carries out the reaction RNA(n) + a ribonucleoside 5'-triphosphate = RNA(n+1) + diphosphate. In terms of biological role, DNA-dependent RNA polymerase catalyzes the transcription of DNA into RNA using the four ribonucleoside triphosphates as substrates. In Methylobacterium nodulans (strain LMG 21967 / CNCM I-2342 / ORS 2060), this protein is DNA-directed RNA polymerase subunit beta'.